The primary structure comprises 130 residues: MARVTVEDCIDKVDNRFDLVLLAAHRARMISSGSQLTIDRDNDKNPVVSLREIAEQTVSPEDLKEELVHSLQKFVEVDEPEQDTVPLIGSAGASVDADDTEVALERMTEEELLKGLEGLAPPEEQPEEDE.

Positions 110–130 are disordered; the sequence is EELLKGLEGLAPPEEQPEEDE.

This sequence belongs to the RNA polymerase subunit omega family. In terms of assembly, the RNAP catalytic core consists of 2 alpha, 1 beta, 1 beta' and 1 omega subunit. When a sigma factor is associated with the core the holoenzyme is formed, which can initiate transcription.

It catalyses the reaction RNA(n) + a ribonucleoside 5'-triphosphate = RNA(n+1) + diphosphate. In terms of biological role, promotes RNA polymerase assembly. Latches the N- and C-terminal regions of the beta' subunit thereby facilitating its interaction with the beta and alpha subunits. The chain is DNA-directed RNA polymerase subunit omega from Rhodopseudomonas palustris (strain HaA2).